Here is a 592-residue protein sequence, read N- to C-terminus: Inactive metallocarboxypeptidase ECM14 (592 aa).

An N-terminal signal peptide occupies residues 1 to 21 (MRQFTHGTLLAILALANTISA). Residues 22 to 174 (IPSFSANNYP…QTVYESYPSS (153 aa)) constitute a propeptide that is removed on maturation. A compositionally biased stretch (polar residues) spans 170 to 179 (SYPSSSQRPT). Residues 170–191 (SYPSSSQRPTDNGRGFLPSRES) are disordered. The Peptidase M14 domain maps to 202-521 (DYQPLSVIGP…NAVMVLGKFL (320 aa)). 2 residues coordinate Zn(2+): H264 and E267. Substrate contacts are provided by residues 264 to 267 (HARE), R322, and 339 to 340 (DR). A disulfide bridge links C333 with C356. N-linked (GlcNAc...) asparagine glycosylation is present at N349. Zn(2+) is bound at residue H396. 397-398 (SY) is a binding site for substrate. The interval 542 to 592 (ADKPILDDGDDDEEEDGQDKNDDSWIPDEYKNDNDHDDDDDGWGLRRRRKR) is disordered. Over residues 548-558 (DDGDDDEEEDG) the composition is skewed to acidic residues. Residues 559–575 (QDKNDDSWIPDEYKNDN) are compositionally biased toward basic and acidic residues.

This sequence belongs to the peptidase M14 family. Zn(2+) is required as a cofactor.

Its subcellular location is the vacuole. It localises to the secreted. Functionally, inactive carboxypeptidase that may play a role in cell wall organization and biogenesis. The sequence is that of Inactive metallocarboxypeptidase ECM14 (ECM14) from Blastomyces gilchristii (strain SLH14081) (Blastomyces dermatitidis).